Consider the following 121-residue polypeptide: Ribonuclease P protein component (121 aa).

The protein belongs to the RnpA family. As to quaternary structure, consists of a catalytic RNA component (M1 or rnpB) and a protein subunit.

The enzyme catalyses Endonucleolytic cleavage of RNA, removing 5'-extranucleotides from tRNA precursor.. Functionally, RNaseP catalyzes the removal of the 5'-leader sequence from pre-tRNA to produce the mature 5'-terminus. It can also cleave other RNA substrates such as 4.5S RNA. The protein component plays an auxiliary but essential role in vivo by binding to the 5'-leader sequence and broadening the substrate specificity of the ribozyme. The sequence is that of Ribonuclease P protein component from Coxiella burnetii (strain Dugway 5J108-111).